Reading from the N-terminus, the 406-residue chain is Tryptophan synthase beta chain (406 aa).

N6-(pyridoxal phosphate)lysine is present on Lys-99.

This sequence belongs to the TrpB family. As to quaternary structure, tetramer of two alpha and two beta chains. Pyridoxal 5'-phosphate serves as cofactor.

The catalysed reaction is (1S,2R)-1-C-(indol-3-yl)glycerol 3-phosphate + L-serine = D-glyceraldehyde 3-phosphate + L-tryptophan + H2O. It participates in amino-acid biosynthesis; L-tryptophan biosynthesis; L-tryptophan from chorismate: step 5/5. Its function is as follows. The beta subunit is responsible for the synthesis of L-tryptophan from indole and L-serine. The chain is Tryptophan synthase beta chain from Phenylobacterium zucineum (strain HLK1).